The following is a 270-amino-acid chain: Thymidine kinase 2, mitochondrial (270 aa).

The transit peptide at 1 to 38 (MLLRSLRSWAARSPRSVGPGSSGSPGSLDSGAGPLWAP) directs the protein to the mitochondrion. Residues 1–54 (MLLRSLRSWAARSPRSVGPGSSGSPGSLDSGAGPLWAPRRAWPPDKDRENDKEK) are disordered. The span at 13 to 34 (SPRSVGPGSSGSPGSLDSGAGP) shows a compositional bias: low complexity. Basic and acidic residues predominate over residues 42–54 (WPPDKDRENDKEK). 62–70 (GNIASGKTT) contacts ATP. Residue glutamate 138 is the Proton acceptor of the active site.

It belongs to the DCK/DGK family. In terms of assembly, homodimer. In terms of tissue distribution, found in most tissues; highly expressed in liver.

The protein localises to the mitochondrion. It carries out the reaction thymidine + ATP = dTMP + ADP + H(+). It catalyses the reaction 2'-deoxycytidine + ATP = dCMP + ADP + H(+). The catalysed reaction is 2'-deoxyuridine + ATP = dUMP + ADP + H(+). Its function is as follows. Phosphorylates thymidine, deoxycytidine, and deoxyuridine in the mitochondrial matrix. In non-replicating cells, where cytosolic dNTP synthesis is down-regulated, mtDNA synthesis depends solely on TK2 and DGUOK. The polypeptide is Thymidine kinase 2, mitochondrial (Tk2) (Mus musculus (Mouse)).